The primary structure comprises 375 residues: Histidine biosynthesis bifunctional protein HisB (375 aa).

The tract at residues 1-168 (MTPILFVDRD…GIAHELADAP (168 aa)) is histidinol-phosphatase. Catalysis depends on Asp8, which acts as the Nucleophile. Asp8, Asp10, and Asp128 together coordinate Mg(2+). The active-site Proton donor is the Asp10. Residues 169 to 375 (RRAVVQRNTK…TALPTTKGAL (207 aa)) form an imidazoleglycerol-phosphate dehydratase region.

It in the N-terminal section; belongs to the histidinol-phosphatase family. The protein in the C-terminal section; belongs to the imidazoleglycerol-phosphate dehydratase family. The cofactor is Mg(2+).

The protein localises to the cytoplasm. The catalysed reaction is D-erythro-1-(imidazol-4-yl)glycerol 3-phosphate = 3-(imidazol-4-yl)-2-oxopropyl phosphate + H2O. It catalyses the reaction L-histidinol phosphate + H2O = L-histidinol + phosphate. It participates in amino-acid biosynthesis; L-histidine biosynthesis; L-histidine from 5-phospho-alpha-D-ribose 1-diphosphate: step 6/9. The protein operates within amino-acid biosynthesis; L-histidine biosynthesis; L-histidine from 5-phospho-alpha-D-ribose 1-diphosphate: step 8/9. The sequence is that of Histidine biosynthesis bifunctional protein HisB from Xanthomonas euvesicatoria pv. vesicatoria (strain 85-10) (Xanthomonas campestris pv. vesicatoria).